The sequence spans 253 residues: FGFR1 oncogene partner 2 homolog (253 aa).

Residues 5–104 adopt a coiled-coil conformation; it reads IEKALADAKA…SALELIMSKY (100 aa). Serine 140 bears the Phosphoserine mark. Positions 160-223 form a coiled coil; it reads LERRHLEANQ…LREILQITRE (64 aa). Residues 231–253 form a disordered region; the sequence is DDASESTSLSALVTNSDLSLRKS. A compositionally biased stretch (polar residues) spans 235–253; sequence ESTSLSALVTNSDLSLRKS.

It belongs to the SIKE family.

The protein localises to the cytoplasm. May be involved in wound healing pathway. The polypeptide is FGFR1 oncogene partner 2 homolog (Fgfr1op2) (Mus musculus (Mouse)).